A 426-amino-acid polypeptide reads, in one-letter code: Enolase 1 (426 aa).

Gln162 provides a ligand contact to (2R)-2-phosphoglycerate. The active-site Proton donor is Glu204. The Mg(2+) site is built by Asp241, Glu284, and Asp311. The (2R)-2-phosphoglycerate site is built by Lys336, Arg365, Ser366, and Lys387. Residue Lys336 is the Proton acceptor of the active site.

It belongs to the enolase family. Mg(2+) is required as a cofactor.

The protein resides in the cytoplasm. Its subcellular location is the secreted. It is found in the cell surface. It catalyses the reaction (2R)-2-phosphoglycerate = phosphoenolpyruvate + H2O. Its pathway is carbohydrate degradation; glycolysis; pyruvate from D-glyceraldehyde 3-phosphate: step 4/5. Catalyzes the reversible conversion of 2-phosphoglycerate (2-PG) into phosphoenolpyruvate (PEP). It is essential for the degradation of carbohydrates via glycolysis. The polypeptide is Enolase 1 (Methanospirillum hungatei JF-1 (strain ATCC 27890 / DSM 864 / NBRC 100397 / JF-1)).